The primary structure comprises 513 residues: GMP synthase [glutamine-hydrolyzing] (513 aa).

Positions 8-198 constitute a Glutamine amidotransferase type-1 domain; it reads MILVLDFGSQ…VFGVCDCEGK (191 aa). The Nucleophile role is filled by Cys85. Active-site residues include His172 and Glu174. A GMPS ATP-PPase domain is found at 199–388; it reads WSMENFIEIE…LGLPDDIVWR (190 aa). An ATP-binding site is contributed by 226–232; the sequence is SGGVDSS.

Homodimer.

It catalyses the reaction XMP + L-glutamine + ATP + H2O = GMP + L-glutamate + AMP + diphosphate + 2 H(+). Its pathway is purine metabolism; GMP biosynthesis; GMP from XMP (L-Gln route): step 1/1. Its function is as follows. Catalyzes the synthesis of GMP from XMP. The chain is GMP synthase [glutamine-hydrolyzing] from Bacillus velezensis (strain DSM 23117 / BGSC 10A6 / LMG 26770 / FZB42) (Bacillus amyloliquefaciens subsp. plantarum).